Reading from the N-terminus, the 210-residue chain is Probable HTH-type transcriptional regulator ArpR (210 aa).

The HTH tetR-type domain occupies 10-70 (QETRAQIIEA…ALLDSLHETH (61 aa)). Residues 33–52 (TLADIAELAGVTRGAIYWHF) constitute a DNA-binding region (H-T-H motif).

Functionally, probable regulatory protein for the antibiotic efflux pump arpABC operon. May function as a repressor. In Pseudomonas putida (Arthrobacter siderocapsulatus), this protein is Probable HTH-type transcriptional regulator ArpR (arpR).